Reading from the N-terminus, the 238-residue chain is Probable amino-acid ABC transporter permease protein y4tF (238 aa).

The ABC transmembrane type-1 domain occupies 29 to 223; the sequence is AWVTIQFTLY…GIALVLSFFM (195 aa). Transmembrane regions (helical) follow at residues 33 to 53, 77 to 97, 103 to 123, 152 to 172, and 203 to 223; these read IQFT…FGIG, LLVQ…MMGI, PVVA…AEIV, VALP…AIAA, and TVYT…SFFM.

The protein belongs to the binding-protein-dependent transport system permease family. HisMQ subfamily.

It localises to the cell inner membrane. In terms of biological role, probably part of the binding-protein-dependent transport system y4tEFGH for an amino acid. Probably responsible for the translocation of the substrate across the membrane. This is Probable amino-acid ABC transporter permease protein y4tF from Sinorhizobium fredii (strain NBRC 101917 / NGR234).